Consider the following 104-residue polypeptide: Small ribosomal subunit protein bS6 (104 aa).

The protein belongs to the bacterial ribosomal protein bS6 family.

In terms of biological role, binds together with bS18 to 16S ribosomal RNA. The sequence is that of Small ribosomal subunit protein bS6 from Elusimicrobium minutum (strain Pei191).